Consider the following 142-residue polypeptide: Small ribosomal subunit protein bS6 (142 aa).

Over residues 110 to 133 (NKKPSHAKEKHEKTEHTHSHHLEE) the composition is skewed to basic and acidic residues. A disordered region spans residues 110–142 (NKKPSHAKEKHEKTEHTHSHHLEEAESVGSHSE).

The protein belongs to the bacterial ribosomal protein bS6 family.

In terms of biological role, binds together with bS18 to 16S ribosomal RNA. In Helicobacter pylori (strain HPAG1), this protein is Small ribosomal subunit protein bS6.